A 406-amino-acid chain; its full sequence is Sorting nexin-6 (406 aa).

The residue at position 1 (Met1) is an N-acetylmethionine. The residue at position 2 (Met2) is an N-acetylmethionine; in Sorting nexin-6, N-terminally processed. Residues 2–179 are interaction with PIM1; the sequence is MEGLDDGPDF…NQDLSVRGKN (178 aa). The 148-residue stretch at 26-173 folds into the PX domain; that stretch reads LQSDAALQVD…HVFLEYNQDL (148 aa). A 1,2-diacyl-sn-glycero-3-phospho-(1D-myo-inositol-4,5-bisphosphate) contacts are provided by residues 41–47, 100–106, and 114–117; these read SERDKVK, FDASREK, and EGSM. Phosphoserine is present on residues Ser116 and Ser194. The segment at 182 to 199 is membrane-binding amphipathic helix; the sequence is EKLEDFFKNMVKSADGVI. In terms of domain architecture, BAR spans 203 to 406; it reads VKDVDDFFEH…NCLAVLNGDT (204 aa).

The protein belongs to the sorting nexin family. As to quaternary structure, forms heterodimers with BAR domain-containing sorting nexins SNX1 and SNX2. The heterodimers are proposed to self-assemble into helical arrays on the membrane to stabilize and expand local membrane curvature underlying endosomal tubule formation. Thought to be a component of the originally described retromer complex (also called SNX-BAR retromer) which is a pentamer containing the heterotrimeric retromer cargo-selective complex (CSC), also described as vacuolar protein sorting subcomplex (VPS), and a heterodimeric membrane-deforming subcomplex formed between SNX1 or SNX2 and SNX5 or SNX6 (also called SNX-BAR subcomplex); the respective CSC and SNX-BAR subcomplexes associate with low affinity. Interacts with SNX1, SNX2, VPS26A, VPS29, VPS35, TGFB receptors, BACE1, BRMS1, PIP5K1C. Interacts with DCTN1; the association with DCTN1 is involved in movement of retromer-c ontaining vesicles toward the TGN. Interacts with PIM1; translocating SNX6 to the nucleus. Interacts with CDKN1B and GIT1. In terms of processing, in vitro phosphorylated by PIM1; not affecting PIM1-dependent nuclear translocation.

It localises to the early endosome membrane. Its subcellular location is the cytoplasmic vesicle. It is found in the cytoplasm. The protein localises to the nucleus. Functionally, involved in several stages of intracellular trafficking. Interacts with membranes phosphatidylinositol 3,4-bisphosphate and/or phosphatidylinositol 4,5-bisphosphate. Acts in part as component of the retromer membrane-deforming SNX-BAR subcomplex. The SNX-BAR retromer mediates retrograde transport of cargo proteins from endosomes to the trans-Golgi network (TGN) and is involved in endosome-to-plasma membrane transport for cargo protein recycling. The SNX-BAR subcomplex functions to deform the donor membrane into a tubular profile called endosome-to-TGN transport carrier (ETC). Does not have in vitro vesicle-to-membrane remodeling activity. Involved in retrograde endosome-to-TGN transport of lysosomal enzyme receptor IGF2R. May function as link between transport vesicles and dynactin. Negatively regulates retrograde transport of BACE1 from the cell surface to the trans-Golgi network. Involved in E-cadherin sorting and degradation; inhibits PIP5K1C-mediated E-cadherin degradation. In association with GIT1 involved in EGFR degradation. Promotes lysosomal degradation of CDKN1B. May contribute to transcription regulation. This Pongo abelii (Sumatran orangutan) protein is Sorting nexin-6 (SNX6).